A 229-amino-acid polypeptide reads, in one-letter code: MNIEEMKKIAAKEALKFIEDDMVIGLGTGSTTAYFIRLLGDMIKKGEVSDIVGVPTSYQSRLLAIESGIPVATLDQVDAIDVAVDGADEVDPNLNLIKGRGAALTMEKIIESRAGMFIVLVDERKLVDYLCQKMPVPIEVIPQAWRAIVEELSIFNAEAKLRMGVNKDGPVITDNGNFIIDAKFPRIDDPLDMEIELNTIPGVVENGIFADIADIVIVGTKEGVKTLER.

Residues 28 to 31 (TGST), 85 to 88 (DGAD), and 98 to 101 (KGRG) contribute to the substrate site. E107 (proton acceptor) is an active-site residue. K125 is a substrate binding site.

Belongs to the ribose 5-phosphate isomerase family. Homodimer.

The enzyme catalyses aldehydo-D-ribose 5-phosphate = D-ribulose 5-phosphate. It functions in the pathway carbohydrate degradation; pentose phosphate pathway; D-ribose 5-phosphate from D-ribulose 5-phosphate (non-oxidative stage): step 1/1. Functionally, catalyzes the reversible conversion of ribose-5-phosphate to ribulose 5-phosphate. The protein is Ribose-5-phosphate isomerase A of Pyrococcus abyssi (strain GE5 / Orsay).